We begin with the raw amino-acid sequence, 95 residues long: Integration host factor subunit alpha (95 aa).

Residues 51–71 (NFDLRDKNERPGRNPKTGEDI) form a disordered region. The segment covering 53 to 69 (DLRDKNERPGRNPKTGE) has biased composition (basic and acidic residues).

The protein belongs to the bacterial histone-like protein family. Heterodimer of an alpha and a beta chain.

In terms of biological role, this protein is one of the two subunits of integration host factor, a specific DNA-binding protein that functions in genetic recombination as well as in transcriptional and translational control. This Vibrio vulnificus (strain CMCP6) protein is Integration host factor subunit alpha.